Consider the following 529-residue polypeptide: Bifunctional purine biosynthesis protein PurH (529 aa).

An MGS-like domain is found at 1–148; sequence MQQRRPVRRA…KNHKDVAIVV (148 aa).

Belongs to the PurH family.

It carries out the reaction (6R)-10-formyltetrahydrofolate + 5-amino-1-(5-phospho-beta-D-ribosyl)imidazole-4-carboxamide = 5-formamido-1-(5-phospho-D-ribosyl)imidazole-4-carboxamide + (6S)-5,6,7,8-tetrahydrofolate. The catalysed reaction is IMP + H2O = 5-formamido-1-(5-phospho-D-ribosyl)imidazole-4-carboxamide. The protein operates within purine metabolism; IMP biosynthesis via de novo pathway; 5-formamido-1-(5-phospho-D-ribosyl)imidazole-4-carboxamide from 5-amino-1-(5-phospho-D-ribosyl)imidazole-4-carboxamide (10-formyl THF route): step 1/1. Its pathway is purine metabolism; IMP biosynthesis via de novo pathway; IMP from 5-formamido-1-(5-phospho-D-ribosyl)imidazole-4-carboxamide: step 1/1. This Salmonella paratyphi C (strain RKS4594) protein is Bifunctional purine biosynthesis protein PurH.